Reading from the N-terminus, the 2147-residue chain is Non-reducing polyketide synthase albA (2147 aa).

The interval 8–244 (YLFGDQTSDI…VKAPIHGPYH (237 aa)) is N-terminal acylcarrier protein transacylase domain (SAT). In terms of domain architecture, Ketosynthase family 3 (KS3) spans 375–806 (CSKIAIIGMS…GGNTAILLED (432 aa)). Residues C547, H682, and H724 each act as for beta-ketoacyl synthase activity in the active site. The tract at residues 912–1232 (FVFTGQGAQY…LSSLHLAGID (321 aa)) is malonyl-CoA:ACP transacylase (MAT) domain. The active-site For acyl/malonyl transferase activity is the S1001. The tract at residues 1286–1425 (HEFLTTAAQK…CTVRFFDCAA (140 aa)) is N-terminal hotdog fold. A PKS/mFAS DH domain is found at 1286–1598 (HEFLTTAAQK…FQGLSRKILD (313 aa)). The interval 1290-1603 (TTAAQKVIET…RKILDTVLPP (314 aa)) is product template (PT) domain. H1326 serves as the catalytic Proton acceptor; for dehydratase activity. The interval 1452–1598 (DAHRLGRGMV…FQGLSRKILD (147 aa)) is C-terminal hotdog fold. The active-site Proton donor; for dehydratase activity is the D1511. The disordered stretch occupies residues 1608–1637 (KGPARPAASAQKAAPAATSKSRASAPAPAK). The span at 1610-1637 (PARPAASAQKAAPAATSKSRASAPAPAK) shows a compositional bias: low complexity. Positions 1642 to 1719 (PSAPSLVKRA…DFKQFLAPMS (78 aa)) constitute a Carrier 1 domain. O-(pantetheine 4'-phosphoryl)serine is present on S1679. Residues 1719-1759 (SQGEASDGSTSDPESSSSFNGGSSTDESSAGSPVSSPPNEK) are disordered. Low complexity predominate over residues 1724 to 1747 (SDGSTSDPESSSSFNGGSSTDESS). Positions 1760–1837 (IEQHATMKEI…DVEDALGLKP (78 aa)) constitute a Carrier 2 domain. S1797 is modified (O-(pantetheine 4'-phosphoryl)serine). A claisen cyclase domain region spans residues 1873–2145 (SPHPRSTSIL…ELGSFIGNAM (273 aa)). The active-site For Claisen cyclase activity is S1963.

The catalysed reaction is 6 malonyl-CoA + acetyl-CoA + 6 H(+) = naphtopyrone YWA1 + 6 CO2 + 7 CoA + H2O. It participates in secondary metabolite biosynthesis. Its function is as follows. Non-reducing polyketide synthase involved in the biosynthesis of bifonsecin B, a dimeric gamma-naphthopyrone. The first step in the biosynthesis of bifonsecin B is the production of gamma-naphthopyrone precursor YWA1 by the non-reducing polyketide synthase albA, via condensation of one acetyl-CoA starter unit with 6 malonyl-CoA units. YWA1 is then methylated by bfoE at position C-6 to yield foncesin which is further methylated at position C-8 by bfoD to produce fonsecin B. A key enzyme in the biosynthetic pathway is the cytochrome P450 monooxygenase bfoB which catalyzes the oxidative dimerization of fonsecin B to bifonsecin B. Bfob also catalyzes the oxidative dimerization of rubrofusarin B into nigerone. The stereoselectivity of bfoB is influenced by the two natural monomeric substrates; homodimerization of fonsecin B yields a stereochemically pure biaryl, M-foncerine B, while rubrofusarin B yields a mixture of enantiomers M- and P-nigerone. The polypeptide is Non-reducing polyketide synthase albA (Aspergillus brasiliensis (strain CBS 101740 / IMI 381727 / IBT 21946)).